Reading from the N-terminus, the 124-residue chain is Ribonuclease pancreatic (124 aa).

Residues 1–15 (KESPAKKFQRQHMDP) show a composition bias toward basic and acidic residues. The segment at 1 to 24 (KESPAKKFQRQHMDPDSSSSNSSN) is disordered. Lys7 and Arg10 together coordinate substrate. His12 acts as the Proton acceptor in catalysis. N-linked (GlcNAc...) asparagine glycans are attached at residues Asn21 and Asn34. Cystine bridges form between Cys26-Cys84, Cys40-Cys95, Cys58-Cys110, and Cys65-Cys72. Substrate is bound by residues 41 to 45 (KPVNT) and Lys66. A glycan (N-linked (GlcNAc...) asparagine) is linked at Asn76. A substrate-binding site is contributed by Arg85. His119 acts as the Proton donor in catalysis.

This sequence belongs to the pancreatic ribonuclease family. In terms of assembly, monomer. Interacts with and forms tight 1:1 complexes with RNH1. Dimerization of two such complexes may occur. Interaction with RNH1 inhibits this protein. Pancreas.

It localises to the secreted. It carries out the reaction an [RNA] containing cytidine + H2O = an [RNA]-3'-cytidine-3'-phosphate + a 5'-hydroxy-ribonucleotide-3'-[RNA].. The enzyme catalyses an [RNA] containing uridine + H2O = an [RNA]-3'-uridine-3'-phosphate + a 5'-hydroxy-ribonucleotide-3'-[RNA].. Functionally, endonuclease that catalyzes the cleavage of RNA on the 3' side of pyrimidine nucleotides. Acts on single-stranded and double-stranded RNA. The polypeptide is Ribonuclease pancreatic (RNASE1) (Sus scrofa (Pig)).